Here is a 227-residue protein sequence, read N- to C-terminus: Cytochrome c oxidase subunit 2 (227 aa).

Residues 1–14 lie on the Mitochondrial intermembrane side of the membrane; it reads MAYPFQLGFQDATS. Residues 15-45 traverse the membrane as a helical segment; it reads PIMEELLHFHDHTLMIVFLISSLVLYIISLM. Topologically, residues 46–59 are mitochondrial matrix; that stretch reads LTTKLTHTSTMDAQ. Residues 60–87 form a helical membrane-spanning segment; it reads EVETIWTILPAIILILIALPSLRILYMM. The Mitochondrial intermembrane portion of the chain corresponds to 88–227; sequence DEINNPSLTV…YFEKWSASML (140 aa). Residues His-161, Cys-196, Glu-198, Cys-200, His-204, and Met-207 each contribute to the Cu cation site. Glu-198 contributes to the Mg(2+) binding site. Tyr-218 bears the Phosphotyrosine mark.

Belongs to the cytochrome c oxidase subunit 2 family. Component of the cytochrome c oxidase (complex IV, CIV), a multisubunit enzyme composed of 14 subunits. The complex is composed of a catalytic core of 3 subunits MT-CO1, MT-CO2 and MT-CO3, encoded in the mitochondrial DNA, and 11 supernumerary subunits COX4I, COX5A, COX5B, COX6A, COX6B, COX6C, COX7A, COX7B, COX7C, COX8 and NDUFA4, which are encoded in the nuclear genome. The complex exists as a monomer or a dimer and forms supercomplexes (SCs) in the inner mitochondrial membrane with NADH-ubiquinone oxidoreductase (complex I, CI) and ubiquinol-cytochrome c oxidoreductase (cytochrome b-c1 complex, complex III, CIII), resulting in different assemblies (supercomplex SCI(1)III(2)IV(1) and megacomplex MCI(2)III(2)IV(2)). Found in a complex with TMEM177, COA6, COX18, COX20, SCO1 and SCO2. Interacts with TMEM177 in a COX20-dependent manner. Interacts with COX20. Interacts with COX16. Requires Cu cation as cofactor.

The protein resides in the mitochondrion inner membrane. The enzyme catalyses 4 Fe(II)-[cytochrome c] + O2 + 8 H(+)(in) = 4 Fe(III)-[cytochrome c] + 2 H2O + 4 H(+)(out). Its function is as follows. Component of the cytochrome c oxidase, the last enzyme in the mitochondrial electron transport chain which drives oxidative phosphorylation. The respiratory chain contains 3 multisubunit complexes succinate dehydrogenase (complex II, CII), ubiquinol-cytochrome c oxidoreductase (cytochrome b-c1 complex, complex III, CIII) and cytochrome c oxidase (complex IV, CIV), that cooperate to transfer electrons derived from NADH and succinate to molecular oxygen, creating an electrochemical gradient over the inner membrane that drives transmembrane transport and the ATP synthase. Cytochrome c oxidase is the component of the respiratory chain that catalyzes the reduction of oxygen to water. Electrons originating from reduced cytochrome c in the intermembrane space (IMS) are transferred via the dinuclear copper A center (CU(A)) of subunit 2 and heme A of subunit 1 to the active site in subunit 1, a binuclear center (BNC) formed by heme A3 and copper B (CU(B)). The BNC reduces molecular oxygen to 2 water molecules using 4 electrons from cytochrome c in the IMS and 4 protons from the mitochondrial matrix. In Felis catus (Cat), this protein is Cytochrome c oxidase subunit 2 (MT-CO2).